The sequence spans 591 residues: MFFYSPNVAPQPSSTSHRRPTLTHQHHLHVGHLDTRLSVQIPEILSRSLVHDPERTRLVPEQLRFIIDENQELWTGSQPPTGFLELCASPVSSVFSNADARRMSQRKLVLRRPTISIQEDGKIIIDHVTARWEGANINSQSALLDADDGATVITDTIKDDQDDKEPKSCPQQTVKYIKILTPHVILVSVLIGYLCLGAWILMLLETRTELLARSKKLVRLTNLMSNFTAESWKMLNNAQHGVSNMDEGEWAATFREWMVRVSETVDDRRPIRRELNRPDDLSNMHNKWTFPTAILYVLTVLTTCGYGEVSVDTDVGKVFSVAFALVGIPLMFITAADIGKFLSETLLQFVSFWNRSVRKVKQWMSRIRHGRRKSLQSTGGPNDTLDILGVDGTEEKLWFPIGAYVSCICIYCSIGSAMFITWERTWSFIHAFHFGFNLIVTVGLGDIVVTDYIFLSLIVAFVIVGLSVVTMCVDLASTHLKAYFTRIHYFGRAKRFLGMSEELKEIVALLGAMRRKKGGKVTWNDVRDFLDNELRDRPFEPHELLMKLRFIDETSSGMSTIRHNSFQSDFFRESEYIRRVAALRPEQPAYL.

The tract at residues 1–24 (MFFYSPNVAPQPSSTSHRRPTLTH) is disordered. The helical transmembrane segment at 184-204 (VILVSVLIGYLCLGAWILMLL) threads the bilayer. N-linked (GlcNAc...) asparagine glycosylation is present at asparagine 226. 5 helical membrane passes run 289–309 (TFPTAILYVLTVLTTCGYGEV), 318–338 (VFSVAFALVGIPLMFITAADI), 400–420 (PIGAYVSCICIYCSIGSAMFI), 428–448 (FIHAFHFGFNLIVTVGLGDIV), and 453–473 (IFLSLIVAFVIVGLSVVTMCV).

It belongs to the two pore domain potassium channel (TC 1.A.1.8) family.

It localises to the membrane. In terms of biological role, has a role in mobility, possibly in the transport of potassium in muscles. In Caenorhabditis elegans, this protein is Uncoordinated protein 58.